A 348-amino-acid chain; its full sequence is Phosphate acyltransferase (348 aa).

Belongs to the PlsX family. Homodimer. Probably interacts with PlsY.

It is found in the cytoplasm. It catalyses the reaction a fatty acyl-[ACP] + phosphate = an acyl phosphate + holo-[ACP]. It functions in the pathway lipid metabolism; phospholipid metabolism. Catalyzes the reversible formation of acyl-phosphate (acyl-PO(4)) from acyl-[acyl-carrier-protein] (acyl-ACP). This enzyme utilizes acyl-ACP as fatty acyl donor, but not acyl-CoA. The sequence is that of Phosphate acyltransferase from Synechocystis sp. (strain ATCC 27184 / PCC 6803 / Kazusa).